Consider the following 362-residue polypeptide: GID complex substrate-recognition subunit 4 (362 aa).

Disordered regions lie at residues 1–40 and 240–267; these read MINN…SRNQ and STDD…ADAG. Lysine 20 is covalently cross-linked (Glycyl lysine isopeptide (Lys-Gly) (interchain with G-Cter in ubiquitin)). Residue serine 27 is modified to Phosphoserine. Residues 240–249 are compositionally biased toward polar residues; that stretch reads STDDNGTTNA.

Belongs to the GID4/VID24 family. In terms of assembly, substrate-recognition component of the GID/CTLH ubiquitin ligase complex. In the absence of stress, the complex exists as an inactive anticipatory complex (GID(Ant)), composed of VID30/GID1, the E3 ubiquitin-ligase RMD5/GID2, VID28/GID5, GID8, and the RING-like subunit FYV10/GID9, awaiting a substrate receptor to form the active E3 ligase complex. When cells are shifted to glucose-containing medium, the substrate receptor VID24/GID4 is induced and becomes part of the complex, named GID(SR4). Additionally, GID7 transforms the GID(SR4) E3 ligase core into a higher-order supramolecular assembly (Chelator-GID(SR4)) specifically tailored for FBP1 ubiquitination. Under osmotic or heat stress, the substrate receptor GID10 is induced and becomes part of the complex, named GID(SR10). Within the complex, VVID24/GID4 is recruited to the complex via interaction with VID28/GID5. Interacts with proteins that have an N-terminal Pro/N-degron, including FBP1, ICL1 and MDH2. Post-translationally, ubiquitinated by the GID complex, leading to subsequent proteasomal degradation.

It is found in the cytoplasmic vesicle membrane. Its function is as follows. Substrate-recognition component of the GID E3 ligase complex recruiting N termini and catalyzing ubiquitination of proteins targeted for degradation. GID E3 is regulated through assembly with interchangeable N-degron-binding substrate receptors induced by distinct environmental perturbations. Required for the adaptation to the presence of glucose in the growth medium; mediates the degradation of enzymes involved in gluconeogenesis when cells are shifted to glucose-containing medium. Required for proteasome-dependent catabolite degradation of fructose-1,6-bisphosphatase (FBP1), malate dehydrogenase (MDH2), and other gluconeogenic enzymes, probably by targeting FBP1-containing vesicles to the vacuole, but is not required for FBP1 sequestration in cytoplasmic vesicles. Specific for substrates with an N-terminal Pro (Pro/N-degron), including FBP1, ICL1 and MDH2. Has high affinity for the N-terminal sequence Pro-Thr-Leu-Val, and can bind peptides with an N-terminal sequence of the type Pro-[Gly,Ala,Ser,Thr,Asp,Asn,Tyr,His]-[Ala,Val,Leu,Ile,Lys,Arg]-[Val,Cys,Pro,Leu,Ile,Trp]. Also recognizes nonproline N-terminal residues and targets an Ile-Gly-Lys-Trp-bearing protein for rapid degradation. The sequence is that of GID complex substrate-recognition subunit 4 from Saccharomyces cerevisiae (strain ATCC 204508 / S288c) (Baker's yeast).